We begin with the raw amino-acid sequence, 220 residues long: Fructose-6-phosphate aldolase (220 aa).

Lysine 85 acts as the Schiff-base intermediate with substrate in catalysis.

Belongs to the transaldolase family. Type 3A subfamily. As to quaternary structure, homodecamer.

Its subcellular location is the cytoplasm. The enzyme catalyses beta-D-fructose 6-phosphate = dihydroxyacetone + D-glyceraldehyde 3-phosphate. Catalyzes the reversible formation of fructose 6-phosphate from dihydroxyacetone and D-glyceraldehyde 3-phosphate via an aldolization reaction. The polypeptide is Fructose-6-phosphate aldolase (Enterobacter sp. (strain 638)).